A 489-amino-acid chain; its full sequence is Pup--protein ligase (489 aa).

Position 25 (E25) interacts with Mg(2+). R69 provides a ligand contact to ATP. Mg(2+) is bound at residue Y71. D73 functions as the Proton acceptor in the catalytic mechanism. E79 serves as a coordination point for Mg(2+). Residues T82 and W447 each coordinate ATP.

It belongs to the Pup ligase/Pup deamidase family. Pup-conjugating enzyme subfamily.

The catalysed reaction is ATP + [prokaryotic ubiquitin-like protein]-L-glutamate + [protein]-L-lysine = ADP + phosphate + N(6)-([prokaryotic ubiquitin-like protein]-gamma-L-glutamyl)-[protein]-L-lysine.. The protein operates within protein degradation; proteasomal Pup-dependent pathway. It participates in protein modification; protein pupylation. Catalyzes the covalent attachment of the prokaryotic ubiquitin-like protein modifier Pup to the proteasomal substrate proteins, thereby targeting them for proteasomal degradation. This tagging system is termed pupylation. The ligation reaction involves the side-chain carboxylate of the C-terminal glutamate of Pup and the side-chain amino group of a substrate lysine. The sequence is that of Pup--protein ligase from Corynebacterium efficiens (strain DSM 44549 / YS-314 / AJ 12310 / JCM 11189 / NBRC 100395).